The sequence spans 352 residues: tRNA-specific 2-thiouridylase MnmA (352 aa).

ATP is bound by residues 9–16 (ALSGGVDS) and M35. The active-site Nucleophile is the C96. An intrachain disulfide couples C96 to C192. G120 serves as a coordination point for ATP. Residues 142–144 (KDQ) are interaction with tRNA. Catalysis depends on C192, which acts as the Cysteine persulfide intermediate. The tract at residues 299–300 (RY) is interaction with tRNA.

This sequence belongs to the MnmA/TRMU family.

It is found in the cytoplasm. The enzyme catalyses S-sulfanyl-L-cysteinyl-[protein] + uridine(34) in tRNA + AH2 + ATP = 2-thiouridine(34) in tRNA + L-cysteinyl-[protein] + A + AMP + diphosphate + H(+). Its function is as follows. Catalyzes the 2-thiolation of uridine at the wobble position (U34) of tRNA, leading to the formation of s(2)U34. The chain is tRNA-specific 2-thiouridylase MnmA from Acidithiobacillus ferrooxidans (strain ATCC 23270 / DSM 14882 / CIP 104768 / NCIMB 8455) (Ferrobacillus ferrooxidans (strain ATCC 23270)).